The primary structure comprises 472 residues: Violaxanthin de-epoxidase, chloroplastic (472 aa).

Disulfide bonds link cysteine 133–cysteine 151, cysteine 138–cysteine 145, cysteine 157–cysteine 174, cysteine 161–cysteine 170, cysteine 189–cysteine 196, and cysteine 242–cysteine 372. Positions 379–462 form a coiled coil; that stretch reads VERLEKTVEE…MEAGEVEKLF (84 aa).

Belongs to the calycin superfamily. Lipocalin family. Post-translationally, disulfide bonds. Reduction of the disulfides results in loss of a rigid structure, a decrease in thermal stability of 15 degrees Celsius and a loss of activity.

The protein resides in the plastid. It localises to the chloroplast thylakoid membrane. It catalyses the reaction all-trans-violaxanthin + 2 L-ascorbate = all-trans-zeaxanthin + 2 L-dehydroascorbate + 2 H2O. Its activity is regulated as follows. Irreversibly inhibited by DTT and iodoacetamide at pH 5.7 or pH 5.2, but not at pH 7.2. Regulated through Ca(2+) gating of H(+) flux at the CFoH(+) channel. Requires the presence of lipids forming reverse hexagonal structures such as monogalactosyldiacylglyceride (MGDG) or phosphatidylethanolamine. A negative curvature elastic stress in the thylakoid lipid bilayer is required for VDE1 activity. In terms of biological role, part of the xanthophyll (or violaxanthin) cycle for controlling the concentration of zeaxanthin in chloroplasts. Catalyzes the two-step mono de-epoxidation reaction. Stereospecific for all-trans xanthophylls. Zeaxanthin induces the dissipation of excitation energy in the chlorophyll of the light-harvesting protein complex of photosystem II. This chain is Violaxanthin de-epoxidase, chloroplastic, found in Spinacia oleracea (Spinach).